Consider the following 454-residue polypeptide: tRNA modification GTPase MnmE (454 aa).

(6S)-5-formyl-5,6,7,8-tetrahydrofolate is bound by residues arginine 23, glutamate 80, and lysine 120. Positions 216 to 377 constitute a TrmE-type G domain; the sequence is GMKVVIAGRP…LRDHLKQSMG (162 aa). Asparagine 226 serves as a coordination point for K(+). GTP-binding positions include 226 to 231, 245 to 251, 270 to 273, 335 to 338, and 358 to 360; these read NAGKSS, TDIAGTT, DTAG, NKAD, and SAR. Residue serine 230 participates in Mg(2+) binding. K(+) is bound by residues threonine 245, isoleucine 247, and threonine 250. Threonine 251 contributes to the Mg(2+) binding site. A (6S)-5-formyl-5,6,7,8-tetrahydrofolate-binding site is contributed by lysine 454.

This sequence belongs to the TRAFAC class TrmE-Era-EngA-EngB-Septin-like GTPase superfamily. TrmE GTPase family. In terms of assembly, homodimer. Heterotetramer of two MnmE and two MnmG subunits. K(+) is required as a cofactor.

The protein resides in the cytoplasm. Exhibits a very high intrinsic GTPase hydrolysis rate. Involved in the addition of a carboxymethylaminomethyl (cmnm) group at the wobble position (U34) of certain tRNAs, forming tRNA-cmnm(5)s(2)U34. The sequence is that of tRNA modification GTPase MnmE from Yersinia pestis bv. Antiqua (strain Antiqua).